The following is a 196-amino-acid chain: Glycerol-3-phosphate acyltransferase (196 aa).

The next 5 helical transmembrane spans lie at 1 to 21 (MIIL…GYLT), 53 to 73 (AITA…GSLL), 78 to 98 (GALV…FLKF), 112 to 132 (IMTS…VMLI), and 152 to 172 (LLFG…VMIF).

The protein belongs to the PlsY family. Probably interacts with PlsX.

The protein resides in the cell membrane. The catalysed reaction is an acyl phosphate + sn-glycerol 3-phosphate = a 1-acyl-sn-glycero-3-phosphate + phosphate. It participates in lipid metabolism; phospholipid metabolism. In terms of biological role, catalyzes the transfer of an acyl group from acyl-phosphate (acyl-PO(4)) to glycerol-3-phosphate (G3P) to form lysophosphatidic acid (LPA). This enzyme utilizes acyl-phosphate as fatty acyl donor, but not acyl-CoA or acyl-ACP. The sequence is that of Glycerol-3-phosphate acyltransferase from Carboxydothermus hydrogenoformans (strain ATCC BAA-161 / DSM 6008 / Z-2901).